The sequence spans 194 residues: Imidazoleglycerol-phosphate dehydratase (194 aa).

It belongs to the imidazoleglycerol-phosphate dehydratase family.

The protein resides in the cytoplasm. The enzyme catalyses D-erythro-1-(imidazol-4-yl)glycerol 3-phosphate = 3-(imidazol-4-yl)-2-oxopropyl phosphate + H2O. It participates in amino-acid biosynthesis; L-histidine biosynthesis; L-histidine from 5-phospho-alpha-D-ribose 1-diphosphate: step 6/9. The protein is Imidazoleglycerol-phosphate dehydratase of Caldicellulosiruptor saccharolyticus (strain ATCC 43494 / DSM 8903 / Tp8T 6331).